We begin with the raw amino-acid sequence, 96 residues long: Myticin-A (96 aa).

A signal peptide spans 1–20 (MKATILLAVLVAVFVAGTEA). The propeptide at 61 to 96 (VNNPFRVNQVAKSINDLDYTPIMKSMENLDNGMDML) is removed in mature form.

Post-translationally, contains four disulfide bonds. In terms of tissue distribution, hemocytes.

It localises to the secreted. In terms of biological role, bacteriolytic activity against Gram-positive bacteria M.luteus, B.megaterium and A.viridans. The protein is Myticin-A of Mytilus galloprovincialis (Mediterranean mussel).